The chain runs to 229 residues: GTP:AMP phosphotransferase (229 aa).

Residue 10 to 15 (GVGKGT) coordinates a ribonucleoside 5'-triphosphate. Residues 30–59 (NVGNILRNEIKKESNIGKEVQNVVRSGNLV) are NMP. AMP is bound by residues R36, 57-59 (NLV), G87, 87-90 (GFPR), and Q94. An LID region spans residues 123–170 (GRRICNICDKNFNVSNIQQDSFDMPPILPSKDCIQCNGHTNLIKRKDD). R178 contributes to the AMP binding site.

It belongs to the adenylate kinase family.

The protein resides in the mitochondrion. The enzyme catalyses a ribonucleoside 5'-triphosphate + AMP = a ribonucleoside 5'-diphosphate + ADP. The catalysed reaction is GTP + AMP = GDP + ADP. Its activity is regulated as follows. Inhibited by the dinucleoside pentaphosphate compound P1,P5-di(guanosine-5') pentaphosphate (GP5A). Its function is as follows. Catalyzes the reversible transfer of the terminal phosphate group between GTP and AMP. Has very low activity with UTP, ITP, CTP and IMP and no activity with ATP, GMP, CMP and UMP in vitro. The sequence is that of GTP:AMP phosphotransferase from Plasmodium falciparum (isolate 3D7).